A 208-amino-acid polypeptide reads, in one-letter code: Uracil phosphoribosyltransferase (208 aa).

5-phospho-alpha-D-ribose 1-diphosphate contacts are provided by residues R77, R102, and 129–137; that span reads DPMLATGNS. Uracil-binding positions include I193 and 198 to 200; that span reads GDA. D199 is a binding site for 5-phospho-alpha-D-ribose 1-diphosphate.

The protein belongs to the UPRTase family. Mg(2+) serves as cofactor.

The enzyme catalyses UMP + diphosphate = 5-phospho-alpha-D-ribose 1-diphosphate + uracil. The protein operates within pyrimidine metabolism; UMP biosynthesis via salvage pathway; UMP from uracil: step 1/1. Its activity is regulated as follows. Allosterically activated by GTP. Catalyzes the conversion of uracil and 5-phospho-alpha-D-ribose 1-diphosphate (PRPP) to UMP and diphosphate. The sequence is that of Uracil phosphoribosyltransferase from Mycoplasmopsis agalactiae (strain NCTC 10123 / CIP 59.7 / PG2) (Mycoplasma agalactiae).